A 540-amino-acid polypeptide reads, in one-letter code: MQLTVWTYEGPPHVGAMRVATGMEKLHYVLHAPQGDTYADLLFTMIERRNKRPPVTYTTFAARDLGKDTAELFMSAARNAYARFKPQAMIVGASCTGSLIQDDPGGLAKSLGFSIPVIPIDLPAYQRKENWGASETFYQLVRAIAGPKAPAPGTKRPERAAGQRAKCNLLGPTALGFRHRDDITEITRLLGQLGIDVNVVAPMGATPADLTRLGEADFNVVLYPEVASQAASWLQRIFHQPFTKTIPIGVSATREFVREVAGLAGVDPEPVLAAASTRLPWYSHSVDSTYLTNKRVFIFGDATHAIASARIASEELGFKVVGLGTYSREFGRDVREAAAKYGVEALITDDYLEVEAKVAELHPELVLGTQMERHIAKRLGVPCAVISAPVHVQDFPARYAPQMGFEGANVIFDTWVHPLMMGLEEHLLAMFKDDFEFKDGALPSHLGTGHAPASAPAAAEVAVALPQSAPVLDGAASNPAPVATAPTGAVWAPEAEKELLKIPFFVRGKARRNTERFANENGVATITVETLYDAKAHFAR.

A [4Fe-4S] cluster-binding site is contributed by Asp36. Residue Asp287 is the Proton donor of the active site. Residue 422–423 (GL) participates in substrate binding.

Belongs to the ChlB/BchB/BchZ family. Protochlorophyllide reductase is composed of three subunits; BchL, BchN and BchB. Forms a heterotetramer of two BchB and two BchN subunits. [4Fe-4S] cluster is required as a cofactor.

The enzyme catalyses chlorophyllide a + oxidized 2[4Fe-4S]-[ferredoxin] + 2 ADP + 2 phosphate = protochlorophyllide a + reduced 2[4Fe-4S]-[ferredoxin] + 2 ATP + 2 H2O. The protein operates within porphyrin-containing compound metabolism; bacteriochlorophyll biosynthesis (light-independent). Functionally, component of the dark-operative protochlorophyllide reductase (DPOR) that uses Mg-ATP and reduced ferredoxin to reduce ring D of protochlorophyllide (Pchlide) to form chlorophyllide a (Chlide). This reaction is light-independent. The NB-protein (BchN-BchB) is the catalytic component of the complex. This chain is Light-independent protochlorophyllide reductase subunit B, found in Rhodopseudomonas palustris (strain TIE-1).